A 288-amino-acid polypeptide reads, in one-letter code: Elongation factor Ts (288 aa).

Residues 82 to 85 (TDFV) are involved in Mg(2+) ion dislocation from EF-Tu.

Belongs to the EF-Ts family.

It localises to the cytoplasm. Functionally, associates with the EF-Tu.GDP complex and induces the exchange of GDP to GTP. It remains bound to the aminoacyl-tRNA.EF-Tu.GTP complex up to the GTP hydrolysis stage on the ribosome. The polypeptide is Elongation factor Ts (Prosthecochloris aestuarii (strain DSM 271 / SK 413)).